A 338-amino-acid polypeptide reads, in one-letter code: Ketol-acid reductoisomerase (NADP(+)) (338 aa).

The region spanning 1–181 is the KARI N-terminal Rossmann domain; it reads MKVFYDKDCD…GGGKAGIIET (181 aa). Residues 24–27, Arg-47, and Ser-52 contribute to the NADP(+) site; that span reads YGSQ. Residue His-107 is part of the active site. Residue Gly-133 coordinates NADP(+). The 146-residue stretch at 182-327 folds into the KARI C-terminal knotted domain; that stretch reads NFREETETDL…EKLRAMMPWI (146 aa). Mg(2+) is bound by residues Asp-190, Glu-194, Glu-226, and Glu-230. A substrate-binding site is contributed by Ser-251.

It belongs to the ketol-acid reductoisomerase family. Requires Mg(2+) as cofactor.

The enzyme catalyses (2R)-2,3-dihydroxy-3-methylbutanoate + NADP(+) = (2S)-2-acetolactate + NADPH + H(+). It catalyses the reaction (2R,3R)-2,3-dihydroxy-3-methylpentanoate + NADP(+) = (S)-2-ethyl-2-hydroxy-3-oxobutanoate + NADPH + H(+). Its pathway is amino-acid biosynthesis; L-isoleucine biosynthesis; L-isoleucine from 2-oxobutanoate: step 2/4. It participates in amino-acid biosynthesis; L-valine biosynthesis; L-valine from pyruvate: step 2/4. Involved in the biosynthesis of branched-chain amino acids (BCAA). Catalyzes an alkyl-migration followed by a ketol-acid reduction of (S)-2-acetolactate (S2AL) to yield (R)-2,3-dihydroxy-isovalerate. In the isomerase reaction, S2AL is rearranged via a Mg-dependent methyl migration to produce 3-hydroxy-3-methyl-2-ketobutyrate (HMKB). In the reductase reaction, this 2-ketoacid undergoes a metal-dependent reduction by NADPH to yield (R)-2,3-dihydroxy-isovalerate. This chain is Ketol-acid reductoisomerase (NADP(+)), found in Polaromonas sp. (strain JS666 / ATCC BAA-500).